A 139-amino-acid polypeptide reads, in one-letter code: Diuretic hormone 41 (139 aa).

The signal sequence occupies residues Met1–Ala20. Positions Ala21–Val79 are excised as a propeptide. Isoleucine amide is present on Ile122.

This sequence belongs to the sauvagine/corticotropin-releasing factor/urotensin I family. In terms of tissue distribution, expressed in corpora cardiaca (CC), corpora allata (CA), antennal lobe (AL) and gnathal ganglion (GNG) (at protein level). Expression in CC and CA detected in all animals, in GNG in most animals, expression in AL detected in few animals (at protein level).

Its subcellular location is the secreted. In terms of biological role, regulation of fluid secretion. The chain is Diuretic hormone 41 from Agrotis ipsilon (Black cutworm moth).